We begin with the raw amino-acid sequence, 218 residues long: MGNITAKLVKDLRDKTGAGMMDCKKALNETEGNLDKALEWLRKKGIASAEKKSGRVAAEGSIGSYIHTGSRVGVLLELNCETDFVARGDIFQSLLKDVSMQVAACPNVEYVSIDEIPEDVVKKEKQIEMGRDDLSGKPEQIKEKIVEGRIAKRLNELVLLSQPYIKDSSLTVEELVKQAAAKIGENIKVRRFTRYTLGEGIEKNQMDFAEEVASMQTN.

Positions 82-85 (TDFV) are involved in Mg(2+) ion dislocation from EF-Tu.

Belongs to the EF-Ts family.

It is found in the cytoplasm. Functionally, associates with the EF-Tu.GDP complex and induces the exchange of GDP to GTP. It remains bound to the aminoacyl-tRNA.EF-Tu.GTP complex up to the GTP hydrolysis stage on the ribosome. The protein is Elongation factor Ts of Prochlorococcus marinus (strain MIT 9215).